The following is a 940-amino-acid chain: Isoleucine--tRNA ligase (940 aa).

The 'HIGH' region motif lies at 58–68 (PYANGSIHIGH). E564 provides a ligand contact to L-isoleucyl-5'-AMP. The 'KMSKS' region motif lies at 605-609 (KMSKS). ATP is bound at residue K608. C903, C906, C923, and C926 together coordinate Zn(2+).

This sequence belongs to the class-I aminoacyl-tRNA synthetase family. IleS type 1 subfamily. In terms of assembly, monomer. It depends on Zn(2+) as a cofactor.

It is found in the cytoplasm. The enzyme catalyses tRNA(Ile) + L-isoleucine + ATP = L-isoleucyl-tRNA(Ile) + AMP + diphosphate. Its function is as follows. Catalyzes the attachment of isoleucine to tRNA(Ile). As IleRS can inadvertently accommodate and process structurally similar amino acids such as valine, to avoid such errors it has two additional distinct tRNA(Ile)-dependent editing activities. One activity is designated as 'pretransfer' editing and involves the hydrolysis of activated Val-AMP. The other activity is designated 'posttransfer' editing and involves deacylation of mischarged Val-tRNA(Ile). The polypeptide is Isoleucine--tRNA ligase (Shewanella sp. (strain ANA-3)).